The chain runs to 36 residues: Mu/kappa-theraphotoxin-Ap1a (36 aa).

Disulfide bonds link cysteine 3-cysteine 18, cysteine 10-cysteine 23, and cysteine 17-cysteine 30. Phenylalanine 36 bears the Phenylalanine amide mark.

Belongs to the neurotoxin 10 (Hwtx-1) family. In terms of tissue distribution, expressed by the venom gland.

It localises to the secreted. Inhibitor of voltage-gated potassium and sodium channels. Among other potassium channels, it selectively inhibits Kv10.1/KCNH1/EAG1 (IC(50)=236 nM) by shifting the voltage dependence of channel activation in a depolarising direction, it shows a maximum inhibition of 80% at saturating concentrations, it shows fast on-rates, and is poorly reversible. It also slightly affects channel inactivation, when the membrane is highly depolarised (&gt;+80 mV). It shows similar potency on Nav1.7/SCN9A (IC(50)=222 nM) and lower potency on Nav1.2/SCN2A (IC(50)=519 nM). This is Mu/kappa-theraphotoxin-Ap1a from Avicularia purpurea (Ecuadorian purple pinktoe tarantula).